The sequence spans 217 residues: uncharacterized protein (217 aa).

An N-terminal signal peptide occupies residues 1–24; it reads MRYTVLIALQGALLLLLLIDDGQG.

This is an uncharacterized protein from Aedes vexans (Inland floodwater mosquito).